The following is a 713-amino-acid chain: Calpain-1 catalytic subunit (713 aa).

Residues 55 to 354 (LFQDDAFPPV…FTKLEICNLT (300 aa)) enclose the Calpain catalytic domain. Residues Cys-115, His-272, and Asn-296 contribute to the active site. At Thr-354 the chain carries Phosphothreonine. The segment at 355-525 (PDALKSRTLR…KKAGTQELDD (171 aa)) is domain III. The interval 526 to 541 (QIQANLPDEKVLSEEE) is linker. The tract at residues 542-712 (IDDNFKTLFS…LFKWLQLTMF (171 aa)) is domain IV. EF-hand domains are found at residues 557 to 575 (DMEI…IISK), 584 to 609 (FSLE…LVEF), 614 to 649 (NRIR…AGFK), and 679 to 713 (VRLE…TMFA). Ca(2+) contacts are provided by Asp-597, Asp-599, Asn-601, Lys-603, Glu-608, Asp-627, Asp-629, Ser-631, Ser-633, and Glu-638.

It belongs to the peptidase C2 family. As to quaternary structure, forms a heterodimer with a small (regulatory) subunit CAPNS1. Ca(2+) is required as a cofactor. In terms of processing, undergoes calcium-induced successive autoproteolytic cleavages that generate a membrane-bound 78 kDa active form and an intracellular 75 kDa active form. Calpastatin reduces with high efficiency the transition from 78 kDa to 75 kDa calpain forms.

It is found in the cytoplasm. The protein localises to the cell membrane. It catalyses the reaction Broad endopeptidase specificity.. Activated by micromolar concentrations of calcium and inhibited by calpastatin. Calcium-regulated non-lysosomal thiol-protease which catalyzes limited proteolysis of substrates involved in cytoskeletal remodeling and signal transduction. Proteolytically cleaves CTBP1 at 'Asn-364', 'Gly-377' and 'His-399'. Cleaves and activates caspase-7 (CASP7). The chain is Calpain-1 catalytic subunit from Rattus norvegicus (Rat).